The primary structure comprises 154 residues: MSMIRRSNVFDPFSLDLWDPFDGFPFGSGSGSLFPRANSDAAAFAGARIDWKETPEAHVFKADVPGLKKEEVKVEVEDGNVLQISGERIKEQEEKTDKWHRVERSSGKFLRRFRLPENTKPEQIKASMENGVLTVTVPKEEPKKPDVKSIQITG.

One can recognise a sHSP domain in the interval 40 to 154; that stretch reads DAAAFAGARI…PDVKSIQITG (115 aa).

This sequence belongs to the small heat shock protein (HSP20) family. In terms of assembly, may form oligomeric structures.

It is found in the cytoplasm. This Oryza sativa subsp. japonica (Rice) protein is 17.4 kDa class I heat shock protein (HSP17.4).